Reading from the N-terminus, the 425-residue chain is ATP-dependent RNA helicase eIF4A (425 aa).

The Q motif motif lies at 38 to 66 (DTWEDYGLKEDLLKGIYSIGFETPSFIQK). Residues 69 to 241 (IQPIIDGRDI…EEILINPVII (173 aa)) form the Helicase ATP-binding domain. 82–89 (AQSGTGKT) contributes to the ATP binding site. The DEAD box signature appears at 187-190 (DEAD). Positions 252 to 425 (GIRQYFIDLR…KELPADFSFQ (174 aa)) constitute a Helicase C-terminal domain.

It belongs to the DEAD box helicase family. eIF4A subfamily. Component of the eIF4F complex, which composition varies with external and internal environmental conditions. It is composed of at least eIF4A, eIF4E and eIF4G.

It localises to the cytoplasm. It catalyses the reaction ATP + H2O = ADP + phosphate + H(+). Its function is as follows. ATP-dependent RNA helicase which is a subunit of the eIF4F complex involved in cap recognition and is required for mRNA binding to ribosome. In the current model of translation initiation, eIF4A unwinds RNA secondary structures in the 5'-UTR of mRNAs which is necessary to allow efficient binding of the small ribosomal subunit, and subsequent scanning for the initiator codon. This chain is ATP-dependent RNA helicase eIF4A (TIF1), found in Encephalitozoon cuniculi (strain GB-M1) (Microsporidian parasite).